The sequence spans 242 residues: GATA zinc finger domain-containing protein 1 (242 aa).

A GATA-type zinc finger spans residues C9–C33. Residues G44 to K85 form a disordered region. The segment covering A45–N54 has biased composition (low complexity).

It localises to the nucleus. Functionally, component of some chromatin complex recruited to chromatin sites methylated 'Lys-4' of histone H3 (H3K4me), with a preference for trimethylated form (H3K4me3). The chain is GATA zinc finger domain-containing protein 1 (gatad1) from Danio rerio (Zebrafish).